The sequence spans 148 residues: Ribosome maturation factor RimP (148 aa).

Belongs to the RimP family.

It localises to the cytoplasm. Its function is as follows. Required for maturation of 30S ribosomal subunits. This Treponema denticola (strain ATCC 35405 / DSM 14222 / CIP 103919 / JCM 8153 / KCTC 15104) protein is Ribosome maturation factor RimP.